The following is a 150-amino-acid chain: UPF0756 membrane protein NTHI1233 (150 aa).

4 consecutive transmembrane segments (helical) span residues 1 to 21 (MTLQ…LGVL), 52 to 72 (YGVK…LVSG), 81 to 101 (GFLS…AWLA), and 123 to 143 (IIGV…AGIL).

It belongs to the UPF0756 family.

Its subcellular location is the cell membrane. This is UPF0756 membrane protein NTHI1233 from Haemophilus influenzae (strain 86-028NP).